Consider the following 273-residue polypeptide: Kit ligand (273 aa).

The N-terminal stretch at 1–25 (MKKTQTWILTCIYLQLLLFNPLVKT) is a signal peptide. The Extracellular segment spans residues 26–214 (EGICRNRVTN…KNPPGDSSLH (189 aa)). 2 cysteine pairs are disulfide-bonded: C29-C114 and C68-C163. N-linked (GlcNAc...) asparagine; partial glycosylation is found at N90 and N118. N145 is a glycosylation site (N-linked (GlcNAc...) asparagine). A glycan (O-linked (GalNAc...) serine) is linked at S167. T168 and T180 each carry an O-linked (GalNAc...) threonine glycan. N195 is a glycosylation site (N-linked (GlcNAc...) asparagine). Residues 215 to 237 (WAAMALPALFSLIIGFAFGALYW) form a helical membrane-spanning segment. Over 238–273 (KKRQPSLTRAVENIQINEEDNEISMLQEKEREFQEV) the chain is Cytoplasmic.

This sequence belongs to the SCF family. Homodimer, non-covalently linked. Heterotetramer with KIT, binding two KIT molecules; thereby mediates KIT dimerization and subsequent activation by autophosphorylation. In terms of processing, a soluble form (sKITLG) is produced by proteolytic processing of isoform 1 in the extracellular domain. Post-translationally, found in two differentially glycosylated forms, LMW-SCF and HMW-SCF. LMW-SCF is fully N-glycosylated at Asn-145, partially N-glycosylated at Asn-90, O-glycosylated at Ser-167, Thr-168 and Thr-180, and not glycosylated at Asn-97 or Asn-118. HMW-SCF is N-glycosylated at Asn-118, Asn-90 and Asn-145, O-glycosylated at Ser-167, Thr-168 and Thr-180, and not glycosylated at Asn-97. A soluble form exists as a cleavage product of the extracellular domain.

Its subcellular location is the cell membrane. The protein localises to the cytoplasm. The protein resides in the cytoskeleton. It localises to the cell projection. It is found in the lamellipodium. Its subcellular location is the filopodium. The protein localises to the secreted. Functionally, ligand for the receptor-type protein-tyrosine kinase KIT. Plays an essential role in the regulation of cell survival and proliferation, hematopoiesis, stem cell maintenance, gametogenesis, mast cell development, migration and function, and in melanogenesis. KITLG/SCF binding can activate several signaling pathways. Promotes phosphorylation of PIK3R1, the regulatory subunit of phosphatidylinositol 3-kinase, and subsequent activation of the kinase AKT1. KITLG/SCF and KIT also transmit signals via GRB2 and activation of RAS, RAF1 and the MAP kinases MAPK1/ERK2 and/or MAPK3/ERK1. KITLG/SCF and KIT promote activation of STAT family members STAT1, STAT3 and STAT5. KITLG/SCF and KIT promote activation of PLCG1, leading to the production of the cellular signaling molecules diacylglycerol and inositol 1,4,5-trisphosphate. KITLG/SCF acts synergistically with other cytokines, probably interleukins. In Homo sapiens (Human), this protein is Kit ligand.